A 469-amino-acid chain; its full sequence is Uronate isomerase (469 aa).

It belongs to the metallo-dependent hydrolases superfamily. Uronate isomerase family.

The catalysed reaction is D-glucuronate = D-fructuronate. It catalyses the reaction aldehydo-D-galacturonate = keto-D-tagaturonate. Its pathway is carbohydrate metabolism; pentose and glucuronate interconversion. The polypeptide is Uronate isomerase (Yersinia pseudotuberculosis serotype O:1b (strain IP 31758)).